The following is a 653-amino-acid chain: Chaperone protein HtpG (653 aa).

Positions methionine 1–arginine 361 are a; substrate-binding. The tract at residues glutamate 362–lysine 578 is b. The tract at residues leucine 579–lysine 653 is c.

Belongs to the heat shock protein 90 family. In terms of assembly, homodimer.

Its subcellular location is the cytoplasm. In terms of biological role, molecular chaperone. Has ATPase activity. The sequence is that of Chaperone protein HtpG from Colwellia psychrerythraea (strain 34H / ATCC BAA-681) (Vibrio psychroerythus).